A 206-amino-acid polypeptide reads, in one-letter code: Pro-glucagon (206 aa).

The first 22 residues, 1–22, serve as a signal peptide directing secretion; the sequence is MKMKSIYFIAGLLLMIVQGSWQ. The interval 27–57 is disordered; sequence DTEEKSRSFKASQSEPLDESRQLNEVKRHSQ. Positions 44 to 54 are enriched in basic and acidic residues; it reads DESRQLNEVKR. Positions 86-109 are excised as a propeptide; it reads NGQQGQEDKENDKFPDQLSSNAIS. R147 carries the arginine amide modification. Propeptides lie at residues 151 to 163 and 199 to 206; these read DFPEKALMAEEMG and RDLLGEYQ.

Belongs to the glucagon family. Post-translationally, proglucagon is post-translationally processed in a tissue-specific manner in pancreatic A cells and intestinal L cells. In pancreatic A cells, the major bioactive hormone is glucagon cleaved by PCSK2/PC2. In the intestinal L cells PCSK1/PC1 liberates GLP-1 and GLP-2. GLP-1 is further N-terminally truncated by post-translational processing in the intestinal L cells resulting in GLP-1(7-37) GLP-1-(7-36)amide.

It localises to the secreted. Functionally, plays a key role in glucose metabolism and homeostasis. Regulates blood glucose by increasing gluconeogenesis and decreasing glycolysis. Its function is as follows. Potent stimulator of glucose-dependent insulin release. Plays important roles on gastric motility and the suppression of plasma glucagon levels. May be involved in the suppression of satiety and stimulation of glucose disposal in peripheral tissues, independent of the actions of insulin. Has growth-promoting activities on intestinal epithelium. May also regulate the hypothalamic pituitary axis (HPA) via effects on LH, TSH, CRH, oxytocin, and vasopressin secretion. Increases islet mass through stimulation of islet neogenesis and pancreatic beta cell proliferation. In terms of biological role, stimulates intestinal growth and up-regulates villus height in the small intestine, concomitant with increased crypt cell proliferation and decreased enterocyte apoptosis. The gastrointestinal tract, from the stomach to the colon is the principal target for GLP-2 action. Plays a key role in nutrient homeostasis, enhancing nutrient assimilation through enhanced gastrointestinal function, as well as increasing nutrient disposal. Stimulates intestinal glucose transport and decreases mucosal permeability. This is Pro-glucagon (GCG) from Gallus gallus (Chicken).